Reading from the N-terminus, the 457-residue chain is Cytochrome b-c1 complex subunit 1, mitochondrial (457 aa).

The N-terminal 26 residues, Met-1–Lys-26, are a transit peptide targeting the mitochondrion.

This sequence belongs to the peptidase M16 family. UQCRC1/QCR1 subfamily. In terms of assembly, component of the ubiquinol-cytochrome c oxidoreductase (cytochrome b-c1 complex, complex III, CIII), a multisubunit enzyme composed of 10 subunits. The complex is composed of 3 respiratory subunits cytochrome b (COB), cytochrome c1 (CYT1) and Rieske protein (RIP1), 2 core protein subunits COR1 and QCR2, and 5 low-molecular weight protein subunits QCR6, QCR7, QCR8, QCR9 and QCR10. The complex exists as an obligatory dimer and forms supercomplexes (SCs) in the inner mitochondrial membrane with a monomer or a dimer of cytochrome c oxidase (complex IV, CIV), resulting in 2 different assemblies (supercomplexes III(2)IV and III(2)IV(2)). COR1 interacts with COX5A at the CIII-CIV interface.

It localises to the mitochondrion inner membrane. Component of the ubiquinol-cytochrome c oxidoreductase, a multisubunit transmembrane complex that is part of the mitochondrial electron transport chain which drives oxidative phosphorylation. The respiratory chain contains 3 multisubunit complexes succinate dehydrogenase (complex II, CII), ubiquinol-cytochrome c oxidoreductase (cytochrome b-c1 complex, complex III, CIII) and cytochrome c oxidase (complex IV, CIV), that cooperate to transfer electrons derived from NADH and succinate to molecular oxygen, creating an electrochemical gradient over the inner membrane that drives transmembrane transport and the ATP synthase. The cytochrome b-c1 complex catalyzes electron transfer from ubiquinol to cytochrome c, linking this redox reaction to translocation of protons across the mitochondrial inner membrane, with protons being carried across the membrane as hydrogens on the quinol. In the process called Q cycle, 2 protons are consumed from the matrix, 4 protons are released into the intermembrane space and 2 electrons are passed to cytochrome c. This is Cytochrome b-c1 complex subunit 1, mitochondrial (COR1) from Saccharomyces cerevisiae (strain ATCC 204508 / S288c) (Baker's yeast).